We begin with the raw amino-acid sequence, 207 residues long: Protein FMP32, mitochondrial (207 aa).

A coiled-coil region spans residues 100 to 136 (ADRSEFHNIQNEYESVKNDLEKLRNKLREEITKTNAG). The chain crosses the membrane as a helical span at residues 184 to 206 (VMQWLIGVCTGTFALVLAYMRLL).

The protein belongs to the CCDC90 family.

Its subcellular location is the mitochondrion. The protein resides in the membrane. This chain is Protein FMP32, mitochondrial (FMP32), found in Saccharomyces cerevisiae (strain ATCC 204508 / S288c) (Baker's yeast).